We begin with the raw amino-acid sequence, 147 residues long: Myoglobin (147 aa).

A Globin domain is found at 2–141; it reads ADFDAVLKFW…VIADLEANYK (140 aa). His-60 lines the nitrite pocket. Residue His-60 coordinates O2. His-89 contributes to the heme b binding site.

Belongs to the globin family. Monomeric.

It is found in the cytoplasm. It localises to the sarcoplasm. The enzyme catalyses Fe(III)-heme b-[protein] + nitric oxide + H2O = Fe(II)-heme b-[protein] + nitrite + 2 H(+). It carries out the reaction H2O2 + AH2 = A + 2 H2O. Monomeric heme protein which primary function is to store oxygen and facilitate its diffusion within muscle tissues. Reversibly binds oxygen through a pentacoordinated heme iron and enables its timely and efficient release as needed during periods of heightened demand. Depending on the oxidative conditions of tissues and cells, and in addition to its ability to bind oxygen, it also has a nitrite reductase activity whereby it regulates the production of bioactive nitric oxide. Under stress conditions, like hypoxia and anoxia, it also protects cells against reactive oxygen species thanks to its pseudoperoxidase activity. In Sarda chiliensis (Pacific bonito), this protein is Myoglobin (mb).